Reading from the N-terminus, the 393-residue chain is Pyrimidine monooxygenase RutA (393 aa).

Residues isoleucine 79–lysine 80, asparagine 145, glutamate 154, arginine 170–tyrosine 171, and serine 220 contribute to the FMN site.

Belongs to the NtaA/SnaA/DszA monooxygenase family. RutA subfamily.

The catalysed reaction is uracil + FMNH2 + NADH + O2 = (Z)-3-ureidoacrylate + FMN + NAD(+) + H2O + H(+). It catalyses the reaction thymine + FMNH2 + NADH + O2 = (Z)-2-methylureidoacrylate + FMN + NAD(+) + H2O + H(+). Its function is as follows. Catalyzes the pyrimidine ring opening between N-3 and C-4 by an unusual flavin hydroperoxide-catalyzed mechanism, adding oxygen atoms in the process to yield ureidoacrylate peracid, that immediately reacts with FMN forming ureidoacrylate and FMN-N(5)-oxide. The FMN-N(5)-oxide reacts spontaneously with NADH to produce FMN. Requires the flavin reductase RutF to regenerate FMN in vivo. The polypeptide is Pyrimidine monooxygenase RutA (Escherichia coli O6:H1 (strain CFT073 / ATCC 700928 / UPEC)).